A 307-amino-acid polypeptide reads, in one-letter code: tRNA dimethylallyltransferase 2 (307 aa).

11-18 (GPTASGKT) provides a ligand contact to ATP. 13–18 (TASGKT) contributes to the substrate binding site. An interaction with substrate tRNA region spans residues 36–39 (DSRQ).

It belongs to the IPP transferase family. In terms of assembly, monomer. Mg(2+) is required as a cofactor.

The catalysed reaction is adenosine(37) in tRNA + dimethylallyl diphosphate = N(6)-dimethylallyladenosine(37) in tRNA + diphosphate. Catalyzes the transfer of a dimethylallyl group onto the adenine at position 37 in tRNAs that read codons beginning with uridine, leading to the formation of N6-(dimethylallyl)adenosine (i(6)A). This is tRNA dimethylallyltransferase 2 from Phocaeicola vulgatus (strain ATCC 8482 / DSM 1447 / JCM 5826 / CCUG 4940 / NBRC 14291 / NCTC 11154) (Bacteroides vulgatus).